Consider the following 236-residue polypeptide: 2,3,4,5-tetrahydropyridine-2,6-dicarboxylate N-acetyltransferase (236 aa).

It belongs to the transferase hexapeptide repeat family. DapH subfamily.

It catalyses the reaction (S)-2,3,4,5-tetrahydrodipicolinate + acetyl-CoA + H2O = L-2-acetamido-6-oxoheptanedioate + CoA. It functions in the pathway amino-acid biosynthesis; L-lysine biosynthesis via DAP pathway; LL-2,6-diaminopimelate from (S)-tetrahydrodipicolinate (acetylase route): step 1/3. Its function is as follows. Catalyzes the transfer of an acetyl group from acetyl-CoA to tetrahydrodipicolinate. This chain is 2,3,4,5-tetrahydropyridine-2,6-dicarboxylate N-acetyltransferase, found in Clostridium botulinum (strain Loch Maree / Type A3).